Here is a 618-residue protein sequence, read N- to C-terminus: Transport protein particle subunit trs85-2 (618 aa).

This sequence belongs to the TRS85 family. As to quaternary structure, part of the multisubunit TRAPP (transport protein particle) complexes I and II.

The protein localises to the golgi apparatus. Its subcellular location is the cis-Golgi network. In terms of biological role, component of the TRAPP I and TRAPP II complexes. TRAPP I plays a key role in the late stages of endoplasmic reticulum to Golgi traffic. TRAPP II seems to play a role in intra-Golgi transport. Has a role late in meiosis following DNA replication. In Schizosaccharomyces pombe (strain 972 / ATCC 24843) (Fission yeast), this protein is Transport protein particle subunit trs85-2 (trs85-2).